Reading from the N-terminus, the 791-residue chain is GDH/6PGL endoplasmic bifunctional protein (791 aa).

Residues 1-19 (MWNMLIVAMCLALLGCLQA) form the signal peptide. Glutamine 20 carries the pyrrolidone carboxylic acid modification. A hexose-6-phosphate dehydrogenase region spans residues 20–526 (QELQGHVSII…SGRLFFSQQQ (507 aa)). Residues 32-39 (GATGDLAK) and tyrosine 149 contribute to the NADP(+) site. Asparagine 157 is a glycosylation site (N-linked (GlcNAc...) asparagine). Lysine 174 is an NADP(+) binding site. Residues lysine 174, 204–208 (HYLGK), glutamate 243, and aspartate 262 contribute to the D-glucose 6-phosphate site. The residue at position 208 (lysine 208) is an N6-succinyllysine. Residue histidine 267 is the Proton acceptor of the active site. Asparagine 282 is a glycosylation site (N-linked (GlcNAc...) asparagine). Residues lysine 360 and arginine 365 each coordinate D-glucose 6-phosphate. Residue arginine 370 participates in NADP(+) binding. Residues 527–540 (PEQLVPGPGPAPMP) are linker. The 6-phosphogluconolactonase stretch occupies residues 541–791 (SDFQVLRAKY…WYMDYDAFLG (251 aa)). Tryptophan 617 is a binding site for NADP(+). N-linked (GlcNAc...) asparagine glycosylation occurs at asparagine 683.

The protein in the N-terminal section; belongs to the glucose-6-phosphate dehydrogenase family. It in the C-terminal section; belongs to the glucosamine/galactosamine-6-phosphate isomerase family. 6-phosphogluconolactonase subfamily. In terms of assembly, homodimer. As to expression, present in most tissues examined, strongest in liver.

The protein resides in the endoplasmic reticulum lumen. The catalysed reaction is D-glucose 6-phosphate + NADP(+) = 6-phospho-D-glucono-1,5-lactone + NADPH + H(+). The enzyme catalyses D-glucose 6-phosphate + NAD(+) = 6-phospho-D-glucono-1,5-lactone + NADH + H(+). It catalyses the reaction 6-phospho-D-glucono-1,5-lactone + H2O = 6-phospho-D-gluconate + H(+). It carries out the reaction 2-deoxy-D-glucose 6-phosphate + NAD(+) = 2-deoxy-6-phospho-D-glucono-1,5-lactone + NADH + H(+). The catalysed reaction is 2-deoxy-D-glucose 6-phosphate + NADP(+) = 2-deoxy-6-phospho-D-glucono-1,5-lactone + NADPH + H(+). The enzyme catalyses D-galactose 6-phosphate + NADP(+) = 6-phospho-D-galactono-1,5-lactone + NADPH + H(+). It catalyses the reaction D-galactose 6-phosphate + NAD(+) = 6-phospho-D-galactono-1,5-lactone + NADH + H(+). It carries out the reaction D-glucosamine 6-phosphate + NADP(+) = 2-amino-2-deoxy-6-phospho-D-glucono-1,5-lactone + NADPH + 2 H(+). The catalysed reaction is D-glucose + NAD(+) = D-glucono-1,5-lactone + NADH + H(+). The enzyme catalyses D-glucose + NADP(+) = D-glucono-1,5-lactone + NADPH + H(+). It catalyses the reaction D-glucose 6-sulfate + NADP(+) = 6-sulfo-D-glucono-1,5-lactone + NADPH + H(+). Its pathway is carbohydrate degradation; pentose phosphate pathway; D-ribulose 5-phosphate from D-glucose 6-phosphate (oxidative stage): step 1/3. It functions in the pathway carbohydrate degradation; pentose phosphate pathway; D-ribulose 5-phosphate from D-glucose 6-phosphate (oxidative stage): step 2/3. It participates in carbohydrate degradation; pentose phosphate pathway; D-ribulose 5-phosphate from D-glucose 6-phosphate (oxidative stage). Its function is as follows. Bifunctional enzyme localized in the lumen of the endoplasmic reticulum that catalyzes the first two steps of the oxidative branch of the pentose phosphate pathway/shunt, an alternative to glycolysis and a major source of reducing power and metabolic intermediates for biosynthetic processes. Has a hexose-6-phosphate dehydrogenase activity, with broad substrate specificity compared to glucose-6-phosphate 1-dehydrogenase/G6PD, and catalyzes the first step of the pentose phosphate pathway. In addition, acts as a 6-phosphogluconolactonase and catalyzes the second step of the pentose phosphate pathway. May have a dehydrogenase activity for alternative substrates including glucosamine 6-phosphate and glucose 6-sulfate. The main function of this enzyme is to provide reducing equivalents such as NADPH to maintain the adequate levels of reductive cofactors in the oxidizing environment of the endoplasmic reticulum. By producing NADPH that is needed by reductases of the lumen of the endoplasmic reticulum like corticosteroid 11-beta-dehydrogenase isozyme 1/HSD11B1, indirectly regulates their activity. This Homo sapiens (Human) protein is GDH/6PGL endoplasmic bifunctional protein.